A 354-amino-acid polypeptide reads, in one-letter code: MVYPRLLINLKEIEENARKVVEMASRRGIEIVGVTKVTLGDPRFAETLRKAGIGILGESRIRNVLRMKKAGIEGPFMLLRLPMMSELVEDVKHFDYIMVSDPDVAKKVDELSREMKRNVKIIYMIDVGDLREGVWFEKAVEEIAQCRGANIVGIGTNFGCYGGIIPTREKFEILLDIKEKLEKNHGFNIEIVSGGNTPALYALENGEIPEGINQLRIGEAIVLGRDITNNRVIDWLSQNTFLIEAEVIEVKEKPSVPLGKRGLDVFGRKVDFVDRGIRKRAICALGEQDIDSRGLIPVDKGVEVLHASSDHIVLDVTDFGDVKVGDVFRFRMTYSCLLKAMTSPFVEKVYEPSI.

Residue K36 is modified to N6-(pyridoxal phosphate)lysine.

The protein belongs to the alanine racemase family. In terms of assembly, homodimer. Pyridoxal 5'-phosphate serves as cofactor.

It carries out the reaction L-lysine = D-lysine. The enzyme catalyses L-ornithine = D-ornithine. It functions in the pathway cell wall biogenesis; peptidoglycan biosynthesis. Catalyzes the interconversion of D-lysine and L-lysine. Has also high activity toward ornithine, and weaker activity toward alanine. Contributes to production of D-lysine and D-alanine for use as peptidoglycan components. This chain is Lysine racemase, found in Thermotoga maritima (strain ATCC 43589 / DSM 3109 / JCM 10099 / NBRC 100826 / MSB8).